Here is a 314-residue protein sequence, read N- to C-terminus: tRNA dimethylallyltransferase (314 aa).

10–17 contributes to the ATP binding site; that stretch reads GPTGVGKT. 12–17 lines the substrate pocket; the sequence is TGVGKT. An interaction with substrate tRNA region spans residues 35-38; sequence DSMQ.

It belongs to the IPP transferase family. In terms of assembly, monomer. The cofactor is Mg(2+).

The enzyme catalyses adenosine(37) in tRNA + dimethylallyl diphosphate = N(6)-dimethylallyladenosine(37) in tRNA + diphosphate. In terms of biological role, catalyzes the transfer of a dimethylallyl group onto the adenine at position 37 in tRNAs that read codons beginning with uridine, leading to the formation of N6-(dimethylallyl)adenosine (i(6)A). In Finegoldia magna (strain ATCC 29328 / DSM 20472 / WAL 2508) (Peptostreptococcus magnus), this protein is tRNA dimethylallyltransferase.